Reading from the N-terminus, the 269-residue chain is uncharacterized protein (269 aa).

This is an uncharacterized protein from Acanthamoeba polyphaga mimivirus (APMV).